We begin with the raw amino-acid sequence, 318 residues long: Olfactory receptor 13C9 (318 aa).

At methionine 1–leucine 25 the chain is on the extracellular side. Asparagine 5 carries an N-linked (GlcNAc...) asparagine glycan. A helical transmembrane segment spans residues leucine 26 to isoleucine 46. The Cytoplasmic portion of the chain corresponds to leucine 47–histidine 54. Residues leucine 55–threonine 75 traverse the membrane as a helical segment. At threonine 76–valine 99 the chain is on the extracellular side. Cysteines 97 and 189 form a disulfide. The chain crosses the membrane as a helical span at residues glutamine 100 to phenylalanine 120. At aspartate 121–asparagine 139 the chain is on the cytoplasmic side. The chain crosses the membrane as a helical span at residues alanine 140 to threonine 160. The Extracellular portion of the chain corresponds to threonine 161–phenylalanine 197. A helical membrane pass occupies residues leucine 198–serine 217. The Cytoplasmic portion of the chain corresponds to tyrosine 218–alanine 237. Residues phenylalanine 238 to methionine 258 traverse the membrane as a helical segment. Topologically, residues tyrosine 259–aspartate 277 are extracellular. Residues lysine 278–leucine 298 form a helical membrane-spanning segment. Topologically, residues arginine 299–lysine 318 are cytoplasmic.

It belongs to the G-protein coupled receptor 1 family.

The protein resides in the cell membrane. Its function is as follows. Odorant receptor. In Homo sapiens (Human), this protein is Olfactory receptor 13C9 (OR13C9).